The following is a 191-amino-acid chain: Zinc finger protein GIS2 (191 aa).

The C2H2-type zinc-finger motif lies at 55 to 77; that stretch reads FKCHYCFRNFPTSQALGGHQNAH.

In terms of tissue distribution, expressed in inflorescence meristems, floral meristems and stem epidermis.

The protein localises to the nucleus. In terms of biological role, probable transcription factor required for the initiation of inflorescence trichomes in response to gibberellin and cytokinin. Is not involved in the regulation of trichome branching. Is functionally equivalent to ZFP8. The polypeptide is Zinc finger protein GIS2 (GIS2) (Arabidopsis thaliana (Mouse-ear cress)).